The chain runs to 521 residues: Probable cytosol aminopeptidase (521 aa).

Positions 268 and 273 each coordinate Mn(2+). Residue lysine 280 is part of the active site. The Mn(2+) site is built by aspartate 291, aspartate 350, and glutamate 352. The active site involves arginine 354.

This sequence belongs to the peptidase M17 family. Requires Mn(2+) as cofactor.

The protein localises to the cytoplasm. It catalyses the reaction Release of an N-terminal amino acid, Xaa-|-Yaa-, in which Xaa is preferably Leu, but may be other amino acids including Pro although not Arg or Lys, and Yaa may be Pro. Amino acid amides and methyl esters are also readily hydrolyzed, but rates on arylamides are exceedingly low.. The enzyme catalyses Release of an N-terminal amino acid, preferentially leucine, but not glutamic or aspartic acids.. Functionally, presumably involved in the processing and regular turnover of intracellular proteins. Catalyzes the removal of unsubstituted N-terminal amino acids from various peptides. In Chromobacterium violaceum (strain ATCC 12472 / DSM 30191 / JCM 1249 / CCUG 213 / NBRC 12614 / NCIMB 9131 / NCTC 9757 / MK), this protein is Probable cytosol aminopeptidase.